Reading from the N-terminus, the 73-residue chain is Biotin/lipoyl attachment protein (73 aa).

One can recognise a Biotinyl-binding domain in the interval Thr-2–Ser-69. Lys-35 is modified (N6-biotinyllysine; alternate). Lys-35 is modified (N6-lipoyllysine; alternate).

In terms of processing, can be both biotinylated and lipoylated on Lys-35 upon overexpression in E.coli depending on the growth medium; the nature of the modification in situ in B.subtilis is unknown.

The protein is Biotin/lipoyl attachment protein (yngHB) of Bacillus subtilis (strain 168).